The following is a 372-amino-acid chain: Carbamoyl phosphate synthase small chain (372 aa).

The tract at residues 1–182 is CPSase; that stretch reads MTLYCKRGYK…PKAPIVHLGN (182 aa). Residues Ser-53, Gly-234, and Gly-236 each contribute to the L-glutamine site. The region spanning 186–372 is the Glutamine amidotransferase type-1 domain; it reads TIVVVDCGVK…KFKKMVSRNA (187 aa). Cys-262 acts as the Nucleophile in catalysis. The L-glutamine site is built by Leu-263, Gln-266, Asn-304, Gly-306, and Tyr-307. Active-site residues include His-347 and Glu-349.

Belongs to the CarA family. In terms of assembly, composed of two chains; the small (or glutamine) chain promotes the hydrolysis of glutamine to ammonia, which is used by the large (or ammonia) chain to synthesize carbamoyl phosphate. Tetramer of heterodimers (alpha,beta)4.

The enzyme catalyses hydrogencarbonate + L-glutamine + 2 ATP + H2O = carbamoyl phosphate + L-glutamate + 2 ADP + phosphate + 2 H(+). It carries out the reaction L-glutamine + H2O = L-glutamate + NH4(+). It participates in amino-acid biosynthesis; L-arginine biosynthesis; carbamoyl phosphate from bicarbonate: step 1/1. The protein operates within pyrimidine metabolism; UMP biosynthesis via de novo pathway; (S)-dihydroorotate from bicarbonate: step 1/3. Functionally, small subunit of the glutamine-dependent carbamoyl phosphate synthetase (CPSase). CPSase catalyzes the formation of carbamoyl phosphate from the ammonia moiety of glutamine, carbonate, and phosphate donated by ATP, constituting the first step of 2 biosynthetic pathways, one leading to arginine and/or urea and the other to pyrimidine nucleotides. The small subunit (glutamine amidotransferase) binds and cleaves glutamine to supply the large subunit with the substrate ammonia. This chain is Carbamoyl phosphate synthase small chain, found in Sulfurisphaera tokodaii (strain DSM 16993 / JCM 10545 / NBRC 100140 / 7) (Sulfolobus tokodaii).